Consider the following 274-residue polypeptide: Large ribosomal subunit protein uL2c (274 aa).

A disordered region spans residues 230–252 (HPHGGGEGRSPIGRSKPLTPWGK).

Belongs to the universal ribosomal protein uL2 family. Part of the 50S ribosomal subunit.

The protein resides in the plastid. The chain is Large ribosomal subunit protein uL2c (rpl2) from Euglena longa (Euglenophycean alga).